Reading from the N-terminus, the 517-residue chain is Crotonobetaine/carnitine--CoA ligase (517 aa).

The protein belongs to the ATP-dependent AMP-binding enzyme family.

It catalyses the reaction 4-(trimethylamino)butanoate + ATP + CoA = 4-(trimethylamino)butanoyl-CoA + AMP + diphosphate. The catalysed reaction is crotonobetaine + ATP + CoA = crotonobetainyl-CoA + AMP + diphosphate. The enzyme catalyses (R)-carnitine + ATP + CoA = (R)-carnitinyl-CoA + AMP + diphosphate. The protein operates within amine and polyamine metabolism; carnitine metabolism. Its function is as follows. Catalyzes the transfer of CoA to carnitine, generating the initial carnitinyl-CoA needed for the CaiB reaction cycle. Also has activity toward crotonobetaine and gamma-butyrobetaine. This Escherichia coli O1:K1 / APEC protein is Crotonobetaine/carnitine--CoA ligase.